A 114-amino-acid polypeptide reads, in one-letter code: UPF0342 protein LCA_0622 (114 aa).

Belongs to the UPF0342 family.

This is UPF0342 protein LCA_0622 from Latilactobacillus sakei subsp. sakei (strain 23K) (Lactobacillus sakei subsp. sakei).